Reading from the N-terminus, the 938-residue chain is Isoleucine--tRNA ligase (938 aa).

A 'HIGH' region motif is present at residues 58 to 68; sequence PYANGSIHIGH. K183 is modified (N6-acetyllysine). E561 is a binding site for L-isoleucyl-5'-AMP. The 'KMSKS' region signature appears at 602 to 606; the sequence is KMSKS. K605 serves as a coordination point for ATP. Positions 901, 904, 921, and 924 each coordinate Zn(2+).

It belongs to the class-I aminoacyl-tRNA synthetase family. IleS type 1 subfamily. As to quaternary structure, monomer. Requires Zn(2+) as cofactor.

The protein resides in the cytoplasm. It carries out the reaction tRNA(Ile) + L-isoleucine + ATP = L-isoleucyl-tRNA(Ile) + AMP + diphosphate. Catalyzes the attachment of isoleucine to tRNA(Ile). As IleRS can inadvertently accommodate and process structurally similar amino acids such as valine, to avoid such errors it has two additional distinct tRNA(Ile)-dependent editing activities. One activity is designated as 'pretransfer' editing and involves the hydrolysis of activated Val-AMP. The other activity is designated 'posttransfer' editing and involves deacylation of mischarged Val-tRNA(Ile). In Escherichia coli O45:K1 (strain S88 / ExPEC), this protein is Isoleucine--tRNA ligase.